A 704-amino-acid chain; its full sequence is DNA ligase (704 aa).

NAD(+) is bound by residues 58–62, 107–108, and Glu138; these read DYEYD and SL. Catalysis depends on Lys140, which acts as the N6-AMP-lysine intermediate. NAD(+)-binding residues include Arg161, Glu199, Lys323, and Lys347. Residues Cys441, Cys444, Cys459, and Cys464 each contribute to the Zn(2+) site. A BRCT domain is found at 621 to 704; that stretch reads EKKGKLAGLN…LKLIGGENTE (84 aa).

Belongs to the NAD-dependent DNA ligase family. LigA subfamily. Mg(2+) is required as a cofactor. Requires Mn(2+) as cofactor.

It catalyses the reaction NAD(+) + (deoxyribonucleotide)n-3'-hydroxyl + 5'-phospho-(deoxyribonucleotide)m = (deoxyribonucleotide)n+m + AMP + beta-nicotinamide D-nucleotide.. Functionally, DNA ligase that catalyzes the formation of phosphodiester linkages between 5'-phosphoryl and 3'-hydroxyl groups in double-stranded DNA using NAD as a coenzyme and as the energy source for the reaction. It is essential for DNA replication and repair of damaged DNA. This is DNA ligase from Sulfurihydrogenibium sp. (strain YO3AOP1).